The primary structure comprises 302 residues: GTPase Era (302 aa).

The Era-type G domain occupies 9–177; it reads YCGFIAIVGR…EKIVRQSLRE (169 aa). A G1 region spans residues 17–24; it reads GRPNVGKS. Position 17 to 24 (17 to 24) interacts with GTP; sequence GRPNVGKS. The segment at 43–47 is G2; it reads QTTRH. Residues 64–67 form a G3 region; sequence DTPG. GTP-binding positions include 64-68 and 126-129; these read DTPGL and NKVD. The interval 126-129 is G4; sequence NKVD. Positions 156–158 are G5; sequence ISA. The KH type-2 domain maps to 208-285; it reads TGEELPYSVT…HLELWVKVKS (78 aa).

Belongs to the TRAFAC class TrmE-Era-EngA-EngB-Septin-like GTPase superfamily. Era GTPase family. In terms of assembly, monomer.

The protein localises to the cytoplasm. Its subcellular location is the cell inner membrane. Its function is as follows. An essential GTPase that binds both GDP and GTP, with rapid nucleotide exchange. Plays a role in 16S rRNA processing and 30S ribosomal subunit biogenesis and possibly also in cell cycle regulation and energy metabolism. This is GTPase Era from Haemophilus influenzae (strain PittGG).